Here is a 944-residue protein sequence, read N- to C-terminus: Isoleucine--tRNA ligase (944 aa).

The 'HIGH' region motif lies at 58-68 (PYANGDIHIGH). Glutamate 568 serves as a coordination point for L-isoleucyl-5'-AMP. Positions 609–613 (KMSKS) match the 'KMSKS' region motif. Lysine 612 contributes to the ATP binding site. Residues cysteine 907, cysteine 910, cysteine 927, and cysteine 930 each coordinate Zn(2+).

It belongs to the class-I aminoacyl-tRNA synthetase family. IleS type 1 subfamily. As to quaternary structure, monomer. Zn(2+) is required as a cofactor.

The protein resides in the cytoplasm. It carries out the reaction tRNA(Ile) + L-isoleucine + ATP = L-isoleucyl-tRNA(Ile) + AMP + diphosphate. In terms of biological role, catalyzes the attachment of isoleucine to tRNA(Ile). As IleRS can inadvertently accommodate and process structurally similar amino acids such as valine, to avoid such errors it has two additional distinct tRNA(Ile)-dependent editing activities. One activity is designated as 'pretransfer' editing and involves the hydrolysis of activated Val-AMP. The other activity is designated 'posttransfer' editing and involves deacylation of mischarged Val-tRNA(Ile). The sequence is that of Isoleucine--tRNA ligase from Psychromonas ingrahamii (strain DSM 17664 / CCUG 51855 / 37).